A 139-amino-acid chain; its full sequence is Large-conductance mechanosensitive channel (139 aa).

Transmembrane regions (helical) follow at residues 19–39 (VGVI…ADII), 40–60 (MPIV…LPLS), and 81–101 (GNFL…FMVI).

It belongs to the MscL family. In terms of assembly, homopentamer.

Its subcellular location is the cell inner membrane. Channel that opens in response to stretch forces in the membrane lipid bilayer. May participate in the regulation of osmotic pressure changes within the cell. The polypeptide is Large-conductance mechanosensitive channel (Nitrobacter winogradskyi (strain ATCC 25391 / DSM 10237 / CIP 104748 / NCIMB 11846 / Nb-255)).